A 177-amino-acid chain; its full sequence is Peptidoglycan-associated lipoprotein (177 aa).

Residues 1–32 (MSRTNISALSPMQKLARNPAVIAMTLALALAG) form the signal peptide. C33 is lipidated: N-palmitoyl cysteine. A lipid anchor (S-diacylglycerol cysteine) is attached at C33. The OmpA-like domain occupies 59-176 (QQDFTVNVGD…RAVTVLGGAG (118 aa)).

The protein belongs to the Pal lipoprotein family. As to quaternary structure, the Tol-Pal system is composed of five core proteins: the inner membrane proteins TolA, TolQ and TolR, the periplasmic protein TolB and the outer membrane protein Pal. They form a network linking the inner and outer membranes and the peptidoglycan layer.

The protein resides in the cell outer membrane. Part of the Tol-Pal system, which plays a role in outer membrane invagination during cell division and is important for maintaining outer membrane integrity. This is Peptidoglycan-associated lipoprotein from Agrobacterium fabrum (strain C58 / ATCC 33970) (Agrobacterium tumefaciens (strain C58)).